We begin with the raw amino-acid sequence, 309 residues long: Homoserine O-succinyltransferase (309 aa).

Residue Cys142 is the Acyl-thioester intermediate of the active site. Substrate is bound by residues Lys163 and Ser192. The Proton acceptor role is filled by His235. Residue Glu237 is part of the active site. Arg249 provides a ligand contact to substrate.

The protein belongs to the MetA family. Homodimer.

It localises to the cytoplasm. The enzyme catalyses L-homoserine + succinyl-CoA = O-succinyl-L-homoserine + CoA. The protein operates within amino-acid biosynthesis; L-methionine biosynthesis via de novo pathway; O-succinyl-L-homoserine from L-homoserine: step 1/1. Its function is as follows. Transfers a succinyl group from succinyl-CoA to L-homoserine, forming succinyl-L-homoserine. This chain is Homoserine O-succinyltransferase, found in Escherichia coli O157:H7.